The sequence spans 177 residues: ATP synthase subunit delta (177 aa).

This sequence belongs to the ATPase delta chain family. In terms of assembly, F-type ATPases have 2 components, F(1) - the catalytic core - and F(0) - the membrane proton channel. F(1) has five subunits: alpha(3), beta(3), gamma(1), delta(1), epsilon(1). F(0) has three main subunits: a(1), b(2) and c(10-14). The alpha and beta chains form an alternating ring which encloses part of the gamma chain. F(1) is attached to F(0) by a central stalk formed by the gamma and epsilon chains, while a peripheral stalk is formed by the delta and b chains.

It is found in the cell inner membrane. Its function is as follows. F(1)F(0) ATP synthase produces ATP from ADP in the presence of a proton or sodium gradient. F-type ATPases consist of two structural domains, F(1) containing the extramembraneous catalytic core and F(0) containing the membrane proton channel, linked together by a central stalk and a peripheral stalk. During catalysis, ATP synthesis in the catalytic domain of F(1) is coupled via a rotary mechanism of the central stalk subunits to proton translocation. This protein is part of the stalk that links CF(0) to CF(1). It either transmits conformational changes from CF(0) to CF(1) or is implicated in proton conduction. The protein is ATP synthase subunit delta of Shewanella halifaxensis (strain HAW-EB4).